The following is a 121-amino-acid chain: Holo-[acyl-carrier-protein] synthase (121 aa).

Residues D5 and E50 each contribute to the Mg(2+) site.

Belongs to the P-Pant transferase superfamily. AcpS family. It depends on Mg(2+) as a cofactor.

The protein localises to the cytoplasm. It carries out the reaction apo-[ACP] + CoA = holo-[ACP] + adenosine 3',5'-bisphosphate + H(+). Its function is as follows. Transfers the 4'-phosphopantetheine moiety from coenzyme A to a Ser of acyl-carrier-protein. This is Holo-[acyl-carrier-protein] synthase from Sulfurimonas denitrificans (strain ATCC 33889 / DSM 1251) (Thiomicrospira denitrificans (strain ATCC 33889 / DSM 1251)).